The sequence spans 549 residues: O-fucosyltransferase 29 (549 aa).

A helical; Signal-anchor for type II membrane protein membrane pass occupies residues Thr43–Phe63. A glycan (N-linked (GlcNAc...) asparagine) is linked at Asn152. Residue His292 to Arg294 participates in substrate binding. N-linked (GlcNAc...) asparagine glycans are attached at residues Asn359 and Asn527. Residues Pro506 to Asp549 form a disordered region. Over residues Asp540 to Asp549 the composition is skewed to basic and acidic residues.

It belongs to the glycosyltransferase GT106 family.

Its subcellular location is the membrane. It functions in the pathway glycan metabolism. This is O-fucosyltransferase 29 from Arabidopsis thaliana (Mouse-ear cress).